The chain runs to 307 residues: Protein pid-3 (307 aa).

In terms of assembly, component of the pid-1 variant of the PETISCO complex (also called the pid-3, erh-2, tofu-6, and ife-3 small RNA complex) containing at least pid-1, tofu-6, ife-3, pid-3, and erh-2, which is required for the biogenesis of a class of 21 nucleotide PIWI-interacting RNAs (piRNAs) that possess a uracil residue at the 5'-end (also called 21U-RNAs). Within the complex interacts with pid-1; the interaction is direct. Component of the tost-1 variant of the PETISCO complex (also called the pid-3, erh-2, tofu-6, and ife-3 small RNA complex) containing at least tost-1, tofu-6, ife-3, pid-3, and erh-2, which plays an essential role in embryogenesis. Within the complex interacts with tost-1. Within the pid-1 and tost-1 variants of the PETISCO complexes interacts with tofu-6 (via the RRM domain) and erh-2. In contrast to the pid-1 variant of the PETISCO complex, the tost-1 variant of the PETISCO complex plays a minor role in the biogenesis of 21U-RNAs. As to expression, expressed in the germline (at protein level).

The protein localises to the cytoplasm. Its subcellular location is the perinuclear region. It localises to the nucleus. Functionally, component of the pid-1 and tost-1 variants of the PETISCO complexes, which have roles in the biogenesis of a class of 21 nucleotide PIWI-interacting RNAs (piRNAs) that possess a uracil residue at the 5'-end (also called 21U-RNAs) and embryogenesis, respectively. Within the pid-1 variant of the PETISCO complex may stabilize 21U-RNA precursor molecules. Promotes the biogenesis of 21U-RNAs. Required for chromosome segregation and cell division in early embryos. The polypeptide is Protein pid-3 (Caenorhabditis elegans).